The primary structure comprises 185 residues: Ribosome-recycling factor (185 aa).

The protein belongs to the RRF family.

It is found in the cytoplasm. Functionally, responsible for the release of ribosomes from messenger RNA at the termination of protein biosynthesis. May increase the efficiency of translation by recycling ribosomes from one round of translation to another. The sequence is that of Ribosome-recycling factor from Pseudoalteromonas atlantica (strain T6c / ATCC BAA-1087).